The sequence spans 202 residues: Small heat shock protein hspG5 (202 aa).

Residues 31 to 202 (KTIIDIIPPM…YSNTIKININ (172 aa)) enclose the sHSP domain. Residues 96 to 138 (TSSTTLDSKEDEASIEEFEDDIKPKSKSTVTTTATKENKEDEN) form a disordered region.

The protein belongs to the small heat shock protein (HSP20) family.

The sequence is that of Small heat shock protein hspG5 (hspG5) from Dictyostelium discoideum (Social amoeba).